A 182-amino-acid chain; its full sequence is A-type ATP synthase subunit E (182 aa).

This sequence belongs to the V-ATPase E subunit family. In terms of assembly, has multiple subunits with at least A(3), B(3), C, D, E, F, H, I and proteolipid K(x).

Its subcellular location is the cell membrane. Functionally, component of the A-type ATP synthase that produces ATP from ADP in the presence of a proton gradient across the membrane. The protein is A-type ATP synthase subunit E of Picrophilus torridus (strain ATCC 700027 / DSM 9790 / JCM 10055 / NBRC 100828 / KAW 2/3).